A 183-amino-acid chain; its full sequence is Macro domain-containing protein (183 aa).

The Macro domain occupies 1–174 (MKKVHLIQAD…IYKNILSNID (174 aa)).

It belongs to the MacroD-type family.

In Acinetobacter sp. (strain ED45-25), this protein is Macro domain-containing protein.